The following is a 937-amino-acid chain: Bifunctional glutamine synthetase adenylyltransferase/adenylyl-removing enzyme (937 aa).

The adenylyl removase stretch occupies residues Met1–Pro436. The interval Pro443–Ala937 is adenylyl transferase.

This sequence belongs to the GlnE family. The cofactor is Mg(2+).

The enzyme catalyses [glutamine synthetase]-O(4)-(5'-adenylyl)-L-tyrosine + phosphate = [glutamine synthetase]-L-tyrosine + ADP. The catalysed reaction is [glutamine synthetase]-L-tyrosine + ATP = [glutamine synthetase]-O(4)-(5'-adenylyl)-L-tyrosine + diphosphate. In terms of biological role, involved in the regulation of glutamine synthetase GlnA, a key enzyme in the process to assimilate ammonia. When cellular nitrogen levels are high, the C-terminal adenylyl transferase (AT) inactivates GlnA by covalent transfer of an adenylyl group from ATP to specific tyrosine residue of GlnA, thus reducing its activity. Conversely, when nitrogen levels are low, the N-terminal adenylyl removase (AR) activates GlnA by removing the adenylyl group by phosphorolysis, increasing its activity. The regulatory region of GlnE binds the signal transduction protein PII (GlnB) which indicates the nitrogen status of the cell. This Xanthomonas campestris pv. campestris (strain ATCC 33913 / DSM 3586 / NCPPB 528 / LMG 568 / P 25) protein is Bifunctional glutamine synthetase adenylyltransferase/adenylyl-removing enzyme.